The chain runs to 272 residues: Cell division protein ZipA (272 aa).

Topologically, residues 1-4 (METH) are periplasmic. A helical transmembrane segment spans residues 5-25 (ILFFILAGLLIAVLIGYSIWS). Over 26–272 (ARREKSRIFS…RQNYLLRVAN (247 aa)) the chain is Cytoplasmic.

Belongs to the ZipA family. As to quaternary structure, interacts with FtsZ via their C-terminal domains.

It localises to the cell inner membrane. Its function is as follows. Essential cell division protein that stabilizes the FtsZ protofilaments by cross-linking them and that serves as a cytoplasmic membrane anchor for the Z ring. Also required for the recruitment to the septal ring of downstream cell division proteins. This Glaesserella parasuis serovar 5 (strain SH0165) (Haemophilus parasuis) protein is Cell division protein ZipA.